A 193-amino-acid chain; its full sequence is Pre-histone-like nucleoprotein (193 aa).

An N-acetylserine; by host modification is found at serine 2. Positions 2–24 are excised as a propeptide; it reads SIFISPSNNTGWGLRAPSKMYGG. Residue lysine 48 is modified to N6-acetyllysine; by host. At threonine 55 the chain carries Phosphothreonine; by host. Positions 183–193 match the Nuclear localization signal motif; it reads RVPVRTRPPRT.

It belongs to the adenoviridae histone-like nucleoprotein family. In terms of assembly, interacts with the core-capsid bridging protein; this interaction bridges the virus core to the capsid. Interacts with host NPM1; this interaction might play a role in placing the pre-histone-like nucleoprotein on the viral DNA or regulating viral gene expression. Interacts with host HMGB1; this interaction inhibits host immune response. Cleaved near the N-terminus by the viral protease during virion maturation to form the mature protein.

Its subcellular location is the virion. It localises to the host nucleus. The protein localises to the host nucleolus. Functionally, plays a role in the inhibition of host immune response within the nucleus. Interacts with cellular nucleosomes and immobilizes the host immune danger signal HMGB1 on chromatin. In turn, prevents HMGB1 release out of the cell and thus decreases inflammation. Also plays a role in the wrapping and condensation of the viral DNA. May also promote viral genome import into the nucleus. This chain is Pre-histone-like nucleoprotein, found in Homo sapiens (Human).